We begin with the raw amino-acid sequence, 585 residues long: Arginine--tRNA ligase (585 aa).

The 'HIGH' region signature appears at 131–141 (ANPTGPMHVGH).

The protein belongs to the class-I aminoacyl-tRNA synthetase family. Monomer.

It is found in the cytoplasm. The enzyme catalyses tRNA(Arg) + L-arginine + ATP = L-arginyl-tRNA(Arg) + AMP + diphosphate. The protein is Arginine--tRNA ligase of Rhizobium etli (strain CIAT 652).